We begin with the raw amino-acid sequence, 780 residues long: LPS-assembly protein LptD (780 aa).

The N-terminal stretch at 1–24 is a signal peptide; sequence MKKRFPTLLATLIWTALYSQHTLA.

Belongs to the LptD family. Component of the lipopolysaccharide transport and assembly complex. Interacts with LptE and LptA.

It localises to the cell outer membrane. In terms of biological role, together with LptE, is involved in the assembly of lipopolysaccharide (LPS) at the surface of the outer membrane. The protein is LPS-assembly protein LptD of Yersinia pestis bv. Antiqua (strain Antiqua).